The following is a 95-amino-acid chain: Protein J1 homolog (95 aa).

The protein belongs to the chordopoxvirinae J1 family. Homodimer. Part of a complex composed of A30, G7, F10 kinase, A15, D2, D3, and J1. Interacts with A45.

The protein localises to the virion. It is found in the host cytoplasm. Its function is as follows. Late protein which is a part of a large complex required for early virion morphogenesis. This complex participates in the formation of virosomes and the incorporation of virosomal contents into nascent immature virions. J1 protein is required for DNA packaging during immature virions (IV) formation. This Sus scrofa (Pig) protein is Protein J1 homolog.